A 156-amino-acid polypeptide reads, in one-letter code: ATP synthase subunit b (156 aa).

The chain crosses the membrane as a helical span at residues Val-12–Ala-32.

This sequence belongs to the ATPase B chain family. In terms of assembly, F-type ATPases have 2 components, F(1) - the catalytic core - and F(0) - the membrane proton channel. F(1) has five subunits: alpha(3), beta(3), gamma(1), delta(1), epsilon(1). F(0) has three main subunits: a(1), b(2) and c(10-14). The alpha and beta chains form an alternating ring which encloses part of the gamma chain. F(1) is attached to F(0) by a central stalk formed by the gamma and epsilon chains, while a peripheral stalk is formed by the delta and b chains.

It localises to the cell inner membrane. Its function is as follows. F(1)F(0) ATP synthase produces ATP from ADP in the presence of a proton or sodium gradient. F-type ATPases consist of two structural domains, F(1) containing the extramembraneous catalytic core and F(0) containing the membrane proton channel, linked together by a central stalk and a peripheral stalk. During catalysis, ATP synthesis in the catalytic domain of F(1) is coupled via a rotary mechanism of the central stalk subunits to proton translocation. Component of the F(0) channel, it forms part of the peripheral stalk, linking F(1) to F(0). The chain is ATP synthase subunit b from Pseudomonas putida (strain ATCC 47054 / DSM 6125 / CFBP 8728 / NCIMB 11950 / KT2440).